A 318-amino-acid polypeptide reads, in one-letter code: Porphobilinogen deaminase (318 aa).

Position 241 is an S-(dipyrrolylmethanemethyl)cysteine (Cys-241).

The protein belongs to the HMBS family. Monomer. The cofactor is dipyrromethane.

It carries out the reaction 4 porphobilinogen + H2O = hydroxymethylbilane + 4 NH4(+). It functions in the pathway porphyrin-containing compound metabolism; protoporphyrin-IX biosynthesis; coproporphyrinogen-III from 5-aminolevulinate: step 2/4. In terms of biological role, tetrapolymerization of the monopyrrole PBG into the hydroxymethylbilane pre-uroporphyrinogen in several discrete steps. The polypeptide is Porphobilinogen deaminase (Geobacter sulfurreducens (strain ATCC 51573 / DSM 12127 / PCA)).